The sequence spans 247 residues: Proteasome subunit alpha type-7-B (247 aa).

Belongs to the peptidase T1A family. In terms of assembly, the 26S proteasome consists of a 20S proteasome core and two 19S regulatory subunits. The 20S proteasome core is composed of 28 subunits that are arranged in four stacked rings, resulting in a barrel-shaped structure. The two end rings are each formed by seven alpha subunits, and the two central rings are each formed by seven beta subunits. The catalytic chamber with the active sites is on the inside of the barrel. Post-translationally, phosphorylated in G2 phase.

It localises to the cytoplasm. It is found in the nucleus. Functionally, the proteasome is a multicatalytic proteinase complex which is characterized by its ability to cleave peptides with Arg, Phe, Tyr, Leu, and Glu adjacent to the leaving group at neutral or slightly basic pH. The proteasome has an ATP-dependent proteolytic activity. This chain is Proteasome subunit alpha type-7-B (psma7-b), found in Xenopus laevis (African clawed frog).